We begin with the raw amino-acid sequence, 412 residues long: Serine hydroxymethyltransferase (412 aa).

(6S)-5,6,7,8-tetrahydrofolate is bound by residues Leu120 and 124-126 (GHL). Lys229 bears the N6-(pyridoxal phosphate)lysine mark. (6S)-5,6,7,8-tetrahydrofolate is bound at residue 352–354 (SPF).

This sequence belongs to the SHMT family. Homodimer. Pyridoxal 5'-phosphate is required as a cofactor.

It localises to the cytoplasm. It catalyses the reaction (6R)-5,10-methylene-5,6,7,8-tetrahydrofolate + glycine + H2O = (6S)-5,6,7,8-tetrahydrofolate + L-serine. Its pathway is one-carbon metabolism; tetrahydrofolate interconversion. It participates in amino-acid biosynthesis; glycine biosynthesis; glycine from L-serine: step 1/1. Its function is as follows. Catalyzes the reversible interconversion of serine and glycine with tetrahydrofolate (THF) serving as the one-carbon carrier. This reaction serves as the major source of one-carbon groups required for the biosynthesis of purines, thymidylate, methionine, and other important biomolecules. Also exhibits THF-independent aldolase activity toward beta-hydroxyamino acids, producing glycine and aldehydes, via a retro-aldol mechanism. In Acetivibrio thermocellus (strain ATCC 27405 / DSM 1237 / JCM 9322 / NBRC 103400 / NCIMB 10682 / NRRL B-4536 / VPI 7372) (Clostridium thermocellum), this protein is Serine hydroxymethyltransferase.